A 96-amino-acid polypeptide reads, in one-letter code: Cytochrome c-553 (96 aa).

The N-terminal stretch at 1 to 19 is a signal peptide; the sequence is MKKVIVALGVLAFANVLMA. Residues Cys29, Cys32, His33, and Met73 each coordinate heme c.

It belongs to the cytochrome c family. Binds 1 heme c group covalently per subunit.

Its subcellular location is the periplasm. Functionally, natural electron acceptor for a formate dehydrogenase. The sequence is that of Cytochrome c-553 from Helicobacter pylori (strain J99 / ATCC 700824) (Campylobacter pylori J99).